A 343-amino-acid chain; its full sequence is F17e-G fimbrial adhesin (343 aa).

An N-terminal signal peptide occupies residues 1 to 22; that stretch reads MTNFYKVFLAVFILVCCNISHA. Residues 23–199 are receptor-binding lectin domain; that stretch reads AVSFIGSTEN…LNPFTLNDTV (177 aa). Residues 65 to 66, 110 to 111, and 138 to 141 each bind a carbohydrate; these read AN, DT, and STQG. A disulfide bond links cysteine 75 and cysteine 132. The tract at residues 200–343 is fimbrillin-binding domain; that stretch reads TSCRLLTPSA…GISTFTFSYQ (144 aa). The tract at residues 287-307 is disordered; it reads LKFGPDSPVKGNENQWQLSTG. Residues 298–307 show a composition bias toward polar residues; it reads NENQWQLSTG.

Belongs to the fimbrial protein family.

The protein resides in the fimbrium. Its function is as follows. Essential fimbrial adhesion factor that mediates binding to N-acetylglucosamine-containing receptors in the host intestinal microvilli, leading to colonization of the intestinal tissue, and diarrhea or septicemia. Also confers adhesiveness to laminin and basement membranes. This chain is F17e-G fimbrial adhesin (f17eG), found in Escherichia coli.